Here is an 85-residue protein sequence, read N- to C-terminus: Large ribosomal subunit protein bL27 (85 aa).

Positions 1–22 (MAHKKAGGSTNNGRDSESKRLG) are disordered.

The protein belongs to the bacterial ribosomal protein bL27 family.

In Psychromonas ingrahamii (strain DSM 17664 / CCUG 51855 / 37), this protein is Large ribosomal subunit protein bL27.